The chain runs to 92 residues: Kinetoplastid membrane protein 11 (92 aa).

The protein belongs to the KMP-11 family. As to quaternary structure, monomer.

Its subcellular location is the cytoplasm. It localises to the cytoskeleton. In terms of biological role, may be involved in the regulation of the cytoskeleton through interaction with the subpellicular microtubules. May be involved in parasite mobility and attachment to the surface of the host cell. Behaves as a strong immunogen during infection. The polypeptide is Kinetoplastid membrane protein 11 (KMP-11/1) (Trypanosoma brucei brucei).